A 505-amino-acid polypeptide reads, in one-letter code: Aminoaldehyde dehydrogenase 2 (505 aa).

The Na(+) site is built by Ile-31 and Asp-99. Residues 159–161 (TPW) and 185–188 (KPSE) contribute to the NAD(+) site. Leu-189 serves as a coordination point for Na(+). 238 to 242 (GSGPT) contacts NAD(+). Glu-260 functions as the Proton acceptor in the catalytic mechanism. Leu-261 is an NAD(+) binding site. Residue Cys-295 is the Nucleophile of the active site. NAD(+) is bound by residues Glu-394 and Trp-460.

This sequence belongs to the aldehyde dehydrogenase family. In terms of assembly, forms homodimers.

The enzyme catalyses 4-aminobutanal + NAD(+) + H2O = 4-aminobutanoate + NADH + 2 H(+). It carries out the reaction 3-aminopropanal + NAD(+) + H2O = beta-alanine + NADH + 2 H(+). The catalysed reaction is 4-(trimethylamino)butanal + NAD(+) + H2O = 4-(trimethylamino)butanoate + NADH + 2 H(+). It catalyses the reaction 4-guanidinobutanal + NAD(+) + H2O = 4-guanidinobutanoate + NADH + 2 H(+). It participates in amine and polyamine biosynthesis; betaine biosynthesis via choline pathway; betaine from betaine aldehyde: step 1/1. Its function is as follows. Dehydrogenase that catalyzes the oxidation of several aminoaldehydes. Metabolizes and detoxifies aldehyde products of polyamine degradation to non-toxic amino acids. Catalyzes the oxidation of 4-aminobutanal and 3-aminopropanal to 4-aminobutanoate and beta-alanine, respectively. Catalyzes the oxidation of 4-(trimethylamino)butanal and 4-guanidinobutanal to 4-trimethylammoniobutanoate and 4-guanidinobutanoate, respectively. This chain is Aminoaldehyde dehydrogenase 2, found in Solanum lycopersicum (Tomato).